A 293-amino-acid chain; its full sequence is MSIFIHKDSRVVVQGVTGKEGAFWAKHMKDMGTQVVFGVTPGKEGQDVDGIPVYHSVRRGIKDHPADVAMLFVPPKFTKDAVFEALDAGIKKICTIADGIPLHEAIQIRRAALSCGAMVVGGNTSGIISVGEAMLGTIPYWIDRVYKKGHVGVMTRSGSLTNEVTAEIVKGGFGVTTLIGVGGDPVPGTRFAELLPLYEADPDTHAVVIIGELGGTMEEEVAEAMEAKAFTKPLVAFMGGRTAPEGKRMGHAGAIVTGGRGTVKGKTEAIVKAGGKVAKRPSEVGALLKALLG.

Residues 17-20, lysine 43, and 96-98 contribute to the CoA site; these read TGKE and IAD. Histidine 251 acts as the Tele-phosphohistidine intermediate in catalysis.

The protein belongs to the succinate/malate CoA ligase alpha subunit family. In terms of assembly, forms a complex with SauC.

The catalysed reaction is sulfoacetate + ATP + CoA = sulfoacetyl-CoA + ADP + phosphate. Its function is as follows. Involved in the degradation of sulfoacetate. Catalyzes the CoA- and ATP-dependent conversion of sulfoacetate to sulfoacetyl-CoA and ADP. Cannot use other sulfonic and carboxylic acids, and shows only residual activity with 3-sulfopropanoate and malonic acid. This is ADP-forming sulfoacetate-CoA ligase subunit SauD from Bilophila wadsworthia (strain 3_1_6).